The sequence spans 703 residues: Polyribonucleotide nucleotidyltransferase (703 aa).

2 residues coordinate Mg(2+): D482 and D488. The 59-residue stretch at 549–607 (PKAQVMKIPEDKVGLVIGPAGKNIKYIKEQFGASVWIDGANAYINAPTIEAVNKAADFI) folds into the KH domain. In terms of domain architecture, S1 motif spans 617-679 (GGVYEGKVIR…EQNRLNLCSP (63 aa)). Residues 677–703 (CSPDYQKPENQERPRKEQLNRKPHHRK) are disordered. The segment covering 682–696 (QKPENQERPRKEQLN) has biased composition (basic and acidic residues).

Belongs to the polyribonucleotide nucleotidyltransferase family. The cofactor is Mg(2+).

It is found in the cytoplasm. The catalysed reaction is RNA(n+1) + phosphate = RNA(n) + a ribonucleoside 5'-diphosphate. Functionally, involved in mRNA degradation. Catalyzes the phosphorolysis of single-stranded polyribonucleotides processively in the 3'- to 5'-direction. This Hydrogenobaculum sp. (strain Y04AAS1) protein is Polyribonucleotide nucleotidyltransferase.